A 156-amino-acid chain; its full sequence is Small ribosomal subunit protein uS7c (156 aa).

This sequence belongs to the universal ribosomal protein uS7 family. As to quaternary structure, part of the 30S ribosomal subunit.

Its subcellular location is the plastid. The protein localises to the chloroplast. In terms of biological role, one of the primary rRNA binding proteins, it binds directly to 16S rRNA where it nucleates assembly of the head domain of the 30S subunit. The protein is Small ribosomal subunit protein uS7c (rps7) of Zamia furfuracea (Cardboard cycad).